A 209-amino-acid chain; its full sequence is Ribosomal RNA large subunit methyltransferase E (209 aa).

Residues G63, W65, D83, D99, and D124 each contribute to the S-adenosyl-L-methionine site. K164 acts as the Proton acceptor in catalysis.

This sequence belongs to the class I-like SAM-binding methyltransferase superfamily. RNA methyltransferase RlmE family.

Its subcellular location is the cytoplasm. The enzyme catalyses uridine(2552) in 23S rRNA + S-adenosyl-L-methionine = 2'-O-methyluridine(2552) in 23S rRNA + S-adenosyl-L-homocysteine + H(+). Specifically methylates the uridine in position 2552 of 23S rRNA at the 2'-O position of the ribose in the fully assembled 50S ribosomal subunit. The polypeptide is Ribosomal RNA large subunit methyltransferase E (Aliivibrio salmonicida (strain LFI1238) (Vibrio salmonicida (strain LFI1238))).